The primary structure comprises 232 residues: Ribonuclease HII (232 aa).

In terms of domain architecture, RNase H type-2 spans 26 to 218; the sequence is RILCGVDEAG…VRRALEGMSA (193 aa). Positions 32, 33, and 127 each coordinate a divalent metal cation.

This sequence belongs to the RNase HII family. Requires Mn(2+) as cofactor. It depends on Mg(2+) as a cofactor.

The protein resides in the cytoplasm. It catalyses the reaction Endonucleolytic cleavage to 5'-phosphomonoester.. Functionally, endonuclease that specifically degrades the RNA of RNA-DNA hybrids. This is Ribonuclease HII from Ralstonia pickettii (strain 12J).